The primary structure comprises 53 residues: UPF0391 membrane protein Bcep18194_C7021 (53 aa).

Helical transmembrane passes span A5–A25 and I30–V50.

The protein belongs to the UPF0391 family.

Its subcellular location is the cell membrane. In Burkholderia lata (strain ATCC 17760 / DSM 23089 / LMG 22485 / NCIMB 9086 / R18194 / 383), this protein is UPF0391 membrane protein Bcep18194_C7021.